Reading from the N-terminus, the 37-residue chain is Cytochrome b6-f complex subunit 5 (37 aa).

The helical transmembrane segment at 5-25 (LLSGIVLGLIPITLAGLFVTA) threads the bilayer.

This sequence belongs to the PetG family. As to quaternary structure, the 4 large subunits of the cytochrome b6-f complex are cytochrome b6, subunit IV (17 kDa polypeptide, PetD), cytochrome f and the Rieske protein, while the 4 small subunits are PetG, PetL, PetM and PetN. The complex functions as a dimer.

Its subcellular location is the plastid. The protein resides in the chloroplast thylakoid membrane. Functionally, component of the cytochrome b6-f complex, which mediates electron transfer between photosystem II (PSII) and photosystem I (PSI), cyclic electron flow around PSI, and state transitions. PetG is required for either the stability or assembly of the cytochrome b6-f complex. The chain is Cytochrome b6-f complex subunit 5 from Angiopteris evecta (Mule's foot fern).